The primary structure comprises 73 residues: Translation initiation factor IF-1 (73 aa).

The S1-like domain maps to 1–73; it reads MAKKDGVIEL…ARGRIVYRYK (73 aa).

It belongs to the IF-1 family. Component of the 30S ribosomal translation pre-initiation complex which assembles on the 30S ribosome in the order IF-2 and IF-3, IF-1 and N-formylmethionyl-tRNA(fMet); mRNA recruitment can occur at any time during PIC assembly.

The protein resides in the cytoplasm. Its function is as follows. One of the essential components for the initiation of protein synthesis. Stabilizes the binding of IF-2 and IF-3 on the 30S subunit to which N-formylmethionyl-tRNA(fMet) subsequently binds. Helps modulate mRNA selection, yielding the 30S pre-initiation complex (PIC). Upon addition of the 50S ribosomal subunit IF-1, IF-2 and IF-3 are released leaving the mature 70S translation initiation complex. The sequence is that of Translation initiation factor IF-1 from Tropheryma whipplei (strain TW08/27) (Whipple's bacillus).